The sequence spans 374 residues: Transcription factor NF-E2 45 kDa subunit (374 aa).

Disordered regions lie at residues 1-21 and 40-61; these read MSPC…IPEP and LNAP…GPPP. The segment at 1 to 83 is required for interaction with MAPK8; sequence MSPCPPQQSR…PGFPLPAPPY (83 aa). Positions 1 to 207 are transactivation domain; that stretch reads MSPCPPQQSR…PPAETPLALE (207 aa). Residues 48 to 61 are compositionally biased toward pro residues; sequence FEPPAPVPYPGPPP. 2 consecutive short sequence motifs (PXY motif) follow at residues 61 to 65 and 79 to 83; these read PPPSY and PAPPY. The tract at residues 132–165 is disordered; it reads LSAGPSKPQEDPESDSGLSLNYSDAESLELEGTE. Residue S158 is modified to Phosphoserine; by MAPK8. A Phosphoserine; by PKA modification is found at S171. A disordered region spans residues 207–227; it reads EPSSGPVRAKPTARGEAGSRD. A bZIP domain is found at 267–330; that stretch reads LVRDIRRRGK…EVMRQQLTDL (64 aa). Positions 269–288 are basic motif; the sequence is RDIRRRGKNKVAAQNCRKRK. The interval 292–299 is leucine-zipper; the sequence is IVQLEREL. K369 participates in a covalent cross-link: Glycyl lysine isopeptide (Lys-Gly) (interchain with G-Cter in SUMO); alternate. Residue K369 forms a Glycyl lysine isopeptide (Lys-Gly) (interchain with G-Cter in SUMO1); alternate linkage.

The protein belongs to the bZIP family. CNC subfamily. Homodimer; can bind DNA as a homodimer. Erythroid transcription activator nuclear factor erythroid-derived 2 (NF-E2), composed of a heterodimer of NFE2 and MAFK, possesses transactivation activity on beta-globin. Also forms high affinity heterodimer with MAFG; the interaction promotes erythropoiesis. Interacts (via the PXY motif 1) with ITCH (via the WW 1 domain); the interaction promotes 'Lys63'-linked ubiquitination of NFE2, translocates it to the cytoplasm and inhibits its transactivation activity. Interacts with KMT2D/MLL2; the interaction promotes transactivation of the beta-globin locus. Interacts with MAPK8 (phosphorylated form); the interaction leads to phosphorylation of NFE2 in undifferentiated cells. Phosphorylated on serine residues. In undifferentiated erythrocytes, phosphorylated by MAPK8 which then leads to ubiquitination and protein degradation. In terms of processing, sumoylated. Sumoylation is required for translocation to nuclear bodies PODs, anchoring to the gene loci, and transactivation of the beta-globin gene. Post-translationally, ubiquitinated mainly by 'Lys63'-linked ubiquitin. Polyubiquitination with 'Lys63'-linked ubiquitin by ITCH retains NFE2 in the cytoplasm preventing its transactivation activity. In undifferentiated erythrocyte, is ubiquitinated after MAPK8-mediatd phosphorylation leading to protein degradation.

It localises to the nucleus. Its subcellular location is the cytoplasm. Component of the NF-E2 complex essential for regulating erythroid and megakaryocytic maturation and differentiation. Binds to the hypersensitive site 2 (HS2) of the beta-globin control region (LCR). This subunit (NFE2) recognizes the TCAT/C sequence of the AP-1-like core palindrome present in a number of erythroid and megakaryocytic gene promoters. Requires MAFK or other small MAF proteins for binding to the NF-E2 motif. May play a role in all aspects of hemoglobin production from globin and heme synthesis to procurement of iron. The polypeptide is Transcription factor NF-E2 45 kDa subunit (NFE2) (Bos taurus (Bovine)).